The following is a 37-amino-acid chain: Cytochrome b6-f complex subunit 5 (37 aa).

The chain crosses the membrane as a helical span at residues 5–25 (FLFGIVLGLIPITLTGLFVTA).

The protein belongs to the PetG family. The 4 large subunits of the cytochrome b6-f complex are cytochrome b6, subunit IV (17 kDa polypeptide, PetD), cytochrome f and the Rieske protein, while the 4 small subunits are PetG, PetL, PetM and PetN. The complex functions as a dimer.

The protein resides in the plastid. Its subcellular location is the chloroplast thylakoid membrane. Component of the cytochrome b6-f complex, which mediates electron transfer between photosystem II (PSII) and photosystem I (PSI), cyclic electron flow around PSI, and state transitions. PetG is required for either the stability or assembly of the cytochrome b6-f complex. This is Cytochrome b6-f complex subunit 5 from Phalaenopsis aphrodite subsp. formosana (Moth orchid).